We begin with the raw amino-acid sequence, 360 residues long: Decorin (360 aa).

Residues 1 to 16 (MKATIIFLLLAQVSWA) form the signal peptide. Positions 17-30 (GPFQQRGLFDFMLE) are excised as a propeptide. Residue serine 34 is glycosylated (O-linked (Xyl...) (glycosaminoglycan) serine). Intrachain disulfides connect cysteine 55-cysteine 61 and cysteine 59-cysteine 68. 12 LRR repeats span residues 74–94 (DKVPKDLPPDTTLLDLQNNKI), 95–118 (TEIKDGDFKNLKNLHALILVNNKI), 119–142 (SKISPGAFTPLVKLERLYLSKNHL), 143–163 (KELPEKMPKTLQELRVHENEI), 164–187 (TKVRKAVFNGLNQMIVVELGTNPL), 188–213 (KSSGIENGAFQGMKKLSYIRIADTNI), 214–234 (TTIPPGLPPSLTELHLDGNKI), 235–258 (TKVDAASLRGLNNLAKLGLSFNSI), 259–282 (SAVDNGSLANTPHLRELHLDNNKL), 283–305 (IKVPGGLADHKYIQVVYLHNNNI), 306–335 (SAVGSNDFCPPGYNTKKASYSGVSLFSNPV), and 336–360 (QYWEIQPSTFRCVYVRSAIQLGNYK). Residue asparagine 212 is glycosylated (N-linked (GlcNAc...) asparagine). Asparagine 263 and asparagine 304 each carry an N-linked (GlcNAc...) asparagine glycan. A disulfide bridge links cysteine 314 with cysteine 347.

The protein belongs to the small leucine-rich proteoglycan (SLRP) family. SLRP class I subfamily. In terms of assembly, binds to type I and type II collagen, fibronectin and TGF-beta. Forms a ternary complex with MFAP2 and ELN. Interacts with DPT. Post-translationally, the attached glycosaminoglycan chain can be either chondroitin sulfate or dermatan sulfate depending upon the tissue of origin.

Its subcellular location is the secreted. The protein resides in the extracellular space. It localises to the extracellular matrix. Its function is as follows. May affect the rate of fibrils formation. The polypeptide is Decorin (DCN) (Equus caballus (Horse)).